We begin with the raw amino-acid sequence, 412 residues long: Proteasome-activating nucleotidase (412 aa).

Residues 15–72 (EDLYRYLLERVTNLEDRNTELREQLRQIEADKRYLETQKVRYEREVRKFKGEIEQMKS) are a coiled coil. ATP is bound by residues 197–202 (GTGKTL) and H336. The tract at residues 410 to 412 (MFA) is docks into pockets in the proteasome alpha-ring to cause gate opening.

This sequence belongs to the AAA ATPase family. Homohexamer. The hexameric complex has a two-ring architecture resembling a top hat that caps the 20S proteasome core at one or both ends. Upon ATP-binding, the C-terminus of PAN interacts with the alpha-rings of the proteasome core by binding to the intersubunit pockets.

Its subcellular location is the cytoplasm. Its function is as follows. ATPase which is responsible for recognizing, binding, unfolding and translocation of substrate proteins into the archaeal 20S proteasome core particle. Is essential for opening the gate of the 20S proteasome via an interaction with its C-terminus, thereby allowing substrate entry and access to the site of proteolysis. Thus, the C-termini of the proteasomal ATPase function like a 'key in a lock' to induce gate opening and therefore regulate proteolysis. Unfolding activity requires energy from ATP hydrolysis, whereas ATP binding alone promotes ATPase-20S proteasome association which triggers gate opening, and supports translocation of unfolded substrates. The chain is Proteasome-activating nucleotidase from Methanosphaerula palustris (strain ATCC BAA-1556 / DSM 19958 / E1-9c).